A 232-amino-acid polypeptide reads, in one-letter code: BTB/POZ domain-containing protein KCTD11 (232 aa).

The BTB domain maps to 1–49 (MLGAMFRAGTPMTPNLNPEGGGHYFIDRDGKAFRHILNFLRLGRLDLPL).

Homopentamer. Interacts with KCTD6 and KCTD21; KCTD11 and KCTD6 or KCTD21 may associate in pentameric assemblies. Component of the BCR(KCTD11) E3 ubiquitin ligase complex, at least composed of CUL3 and KCTD11 and RBX1. Interacts (via BTB domain) with CUL3; initially a 4:4 stoichiometry has been reported, however, electron microscopy revealed pentameric states of the BTB domain.

Its pathway is protein modification; protein ubiquitination. Functionally, plays a role as a marker and a regulator of neuronal differentiation; Up-regulated by a variety of neurogenic signals, such as retinoic acid, epidermal growth factor/EGF and NGFB/nerve growth factor. Induces apoptosis, growth arrest and the expression of cyclin-dependent kinase inhibitor CDKN1B. Plays a role as a tumor repressor and inhibits cell growth and tumorigenicity of medulloblastoma (MDB). Acts as a probable substrate-specific adapter for a BCR (BTB-CUL3-RBX1) E3 ubiquitin-protein ligase complex towards HDAC1. Functions as antagonist of the Hedgehog pathway on cell proliferation and differentiation by affecting the nuclear transfer of transcription factor GLI1, thus maintaining cerebellar granule cells in undifferentiated state, this effect probably occurs via HDAC1 down-regulation, keeping GLI1 acetylated and inactive. This chain is BTB/POZ domain-containing protein KCTD11 (KCTD11), found in Bos taurus (Bovine).